A 206-amino-acid polypeptide reads, in one-letter code: Ribosomal RNA small subunit methyltransferase G (206 aa).

S-adenosyl-L-methionine contacts are provided by residues Gly74, Leu79, 125-126, and Arg140; that span reads VE.

The protein belongs to the methyltransferase superfamily. RNA methyltransferase RsmG family.

Its subcellular location is the cytoplasm. The enzyme catalyses guanosine(527) in 16S rRNA + S-adenosyl-L-methionine = N(7)-methylguanosine(527) in 16S rRNA + S-adenosyl-L-homocysteine. Its function is as follows. Specifically methylates the N7 position of guanine in position 527 of 16S rRNA. This is Ribosomal RNA small subunit methyltransferase G from Shewanella sp. (strain ANA-3).